A 136-amino-acid polypeptide reads, in one-letter code: Succinate dehydrogenase 2 membrane subunit SdhC (136 aa).

Helical transmembrane passes span 32–52 (RISG…AAML), 70–90 (IVGL…LNGI), and 109–129 (LWII…VVGI). Histidine 85 contacts heme.

This sequence belongs to the cytochrome b560 family. As to quaternary structure, part of an enzyme complex containing four subunits: a flavoprotein (SdhA), an iron-sulfur protein (SdhB), plus two membrane-anchoring proteins (SdhC and SdhD). Requires heme as cofactor.

The protein localises to the cell membrane. In terms of biological role, membrane-anchoring subunit of succinate dehydrogenase 2 (Sdh2). Sdh2 may catalyze the two-electron oxidation of succinate to fumarate with a corresponding reduction of quinone to quinol under low oxygen conditions, when the primary aerobic succinate dehydrogenase (Sdh1) is inhibited. Sdh2 seems to be the generator of the proton motive force (PMF) under hypoxia. The polypeptide is Succinate dehydrogenase 2 membrane subunit SdhC (Mycobacterium tuberculosis (strain ATCC 25618 / H37Rv)).